The chain runs to 311 residues: tRNA-cytidine(32) 2-sulfurtransferase (311 aa).

A PP-loop motif motif is present at residues S47–S52. 3 residues coordinate [4Fe-4S] cluster: C122, C125, and C213.

It belongs to the TtcA family. As to quaternary structure, homodimer. Requires Mg(2+) as cofactor. [4Fe-4S] cluster serves as cofactor.

The protein resides in the cytoplasm. The catalysed reaction is cytidine(32) in tRNA + S-sulfanyl-L-cysteinyl-[cysteine desulfurase] + AH2 + ATP = 2-thiocytidine(32) in tRNA + L-cysteinyl-[cysteine desulfurase] + A + AMP + diphosphate + H(+). It functions in the pathway tRNA modification. Catalyzes the ATP-dependent 2-thiolation of cytidine in position 32 of tRNA, to form 2-thiocytidine (s(2)C32). The sulfur atoms are provided by the cysteine/cysteine desulfurase (IscS) system. This is tRNA-cytidine(32) 2-sulfurtransferase from Escherichia coli O1:K1 / APEC.